Here is a 149-residue protein sequence, read N- to C-terminus: D-aminoacyl-tRNA deacylase (149 aa).

A Gly-cisPro motif, important for rejection of L-amino acids motif is present at residues 137–138; it reads GP.

It belongs to the DTD family. Homodimer.

It is found in the cytoplasm. It carries out the reaction glycyl-tRNA(Ala) + H2O = tRNA(Ala) + glycine + H(+). The catalysed reaction is a D-aminoacyl-tRNA + H2O = a tRNA + a D-alpha-amino acid + H(+). In terms of biological role, an aminoacyl-tRNA editing enzyme that deacylates mischarged D-aminoacyl-tRNAs. Also deacylates mischarged glycyl-tRNA(Ala), protecting cells against glycine mischarging by AlaRS. Acts via tRNA-based rather than protein-based catalysis; rejects L-amino acids rather than detecting D-amino acids in the active site. By recycling D-aminoacyl-tRNA to D-amino acids and free tRNA molecules, this enzyme counteracts the toxicity associated with the formation of D-aminoacyl-tRNA entities in vivo and helps enforce protein L-homochirality. In Geobacter sp. (strain M21), this protein is D-aminoacyl-tRNA deacylase.